Reading from the N-terminus, the 395-residue chain is Acetylornithine aminotransferase (395 aa).

Residues 117-118 (GA) and Phe-144 each bind pyridoxal 5'-phosphate. Arg-147 is a binding site for N(2)-acetyl-L-ornithine. 230-233 (DEVQ) is a pyridoxal 5'-phosphate binding site. Residue Lys-259 is modified to N6-(pyridoxal phosphate)lysine. N(2)-acetyl-L-ornithine is bound at residue Ser-285. Thr-286 is a pyridoxal 5'-phosphate binding site.

It belongs to the class-III pyridoxal-phosphate-dependent aminotransferase family. ArgD subfamily. In terms of assembly, homodimer. Requires pyridoxal 5'-phosphate as cofactor.

Its subcellular location is the cytoplasm. It catalyses the reaction N(2)-acetyl-L-ornithine + 2-oxoglutarate = N-acetyl-L-glutamate 5-semialdehyde + L-glutamate. The protein operates within amino-acid biosynthesis; L-arginine biosynthesis; N(2)-acetyl-L-ornithine from L-glutamate: step 4/4. In Methanosarcina acetivorans (strain ATCC 35395 / DSM 2834 / JCM 12185 / C2A), this protein is Acetylornithine aminotransferase.